We begin with the raw amino-acid sequence, 451 residues long: Alpha-galactosidase (451 aa).

An NAD(+)-binding site is contributed by 5-71; the sequence is PKITFIGAGS…ASGRITCHTN (67 aa). Residue Asn-151 participates in substrate binding. Cys-173 is a binding site for Mn(2+). The active-site Proton donor is the His-174. His-203 lines the Mn(2+) pocket. Arg-287 contacts substrate.

The protein belongs to the glycosyl hydrolase 4 family. As to quaternary structure, homodimer. Requires Mn(2+) as cofactor. NAD(+) serves as cofactor.

It catalyses the reaction Hydrolysis of terminal, non-reducing alpha-D-galactose residues in alpha-D-galactosides, including galactose oligosaccharides, galactomannans and galactolipids.. The chain is Alpha-galactosidase (melA) from Salmonella typhimurium (strain LT2 / SGSC1412 / ATCC 700720).